The primary structure comprises 218 residues: Putative glutamine transport system permease protein GlnP (218 aa).

An ABC transmembrane type-1 domain is found at 19–208; sequence TLVTLKYSVI…ILVILISFIA (190 aa). The next 4 membrane-spanning stretches (helical) occupy residues 25 to 45, 57 to 79, 86 to 108, and 187 to 207; these read YSVI…ICKV, FYTS…FAAP, FNVF…SEVI, and FFPM…ISFI.

Belongs to the binding-protein-dependent transport system permease family. HisMQ subfamily.

It localises to the cell inner membrane. In terms of biological role, part of the binding-protein-dependent transport system for glutamine; probably responsible for the translocation of the substrate across the membrane. The polypeptide is Putative glutamine transport system permease protein GlnP (glnP) (Rickettsia prowazekii (strain Madrid E)).